A 314-amino-acid polypeptide reads, in one-letter code: Porphobilinogen deaminase (314 aa).

C249 is subject to S-(dipyrrolylmethanemethyl)cysteine.

Belongs to the HMBS family. As to quaternary structure, monomer. Dipyrromethane serves as cofactor.

The catalysed reaction is 4 porphobilinogen + H2O = hydroxymethylbilane + 4 NH4(+). It functions in the pathway porphyrin-containing compound metabolism; protoporphyrin-IX biosynthesis; coproporphyrinogen-III from 5-aminolevulinate: step 2/4. Functionally, tetrapolymerization of the monopyrrole PBG into the hydroxymethylbilane pre-uroporphyrinogen in several discrete steps. The protein is Porphobilinogen deaminase of Brucella abortus (strain S19).